The chain runs to 103 residues: Small ubiquitin-related modifier 2 (103 aa).

The Ubiquitin-like domain occupies 15–92 (AHINLKVKGQ…IDAMLHQTGG (78 aa)). G92 is covalently cross-linked (Glycyl lysine isopeptide (Gly-Lys) (interchain with K-? in acceptor proteins)).

This sequence belongs to the ubiquitin family. SUMO subfamily. As to quaternary structure, interacts with SAE2, SCE1, SIZ1 and MMS21. Interacts with HSFA2. Covalently attached to ABI5, FLD, GTE3, HSFA2 and ICE1.

Its subcellular location is the nucleus. The protein localises to the cytoplasm. Functionally, ubiquitin-like protein which can be covalently attached to target lysines as a monomer. Does not seem to be involved in protein degradation and may function as an antagonist of ubiquitin in the degradation process. Required for the massive protein sumoylation in the nucleus induced by heat shock and controlled by SIZ1. This chain is Small ubiquitin-related modifier 2, found in Arabidopsis thaliana (Mouse-ear cress).